The chain runs to 71 residues: Beta-defensin 124 (71 aa).

Residues 1–22 form the signal peptide; that stretch reads MTQLLLFLVALLVLGHVPSGRS. 3 disulfides stabilise this stretch: Cys-27-Cys-54, Cys-34-Cys-48, and Cys-38-Cys-55.

It belongs to the beta-defensin family.

The protein localises to the secreted. Has antibacterial activity. The polypeptide is Beta-defensin 124 (DEFB124) (Pan troglodytes (Chimpanzee)).